The chain runs to 179 residues: Cell division protein SepF (179 aa).

The segment at leucine 22–glycine 53 is disordered. The span at proline 34–glycine 53 shows a compositional bias: polar residues.

Belongs to the SepF family. Homodimer. Interacts with FtsZ.

It is found in the cytoplasm. In terms of biological role, cell division protein that is part of the divisome complex and is recruited early to the Z-ring. Probably stimulates Z-ring formation, perhaps through the cross-linking of FtsZ protofilaments. Its function overlaps with FtsA. The chain is Cell division protein SepF from Streptococcus pneumoniae (strain P1031).